The primary structure comprises 95 residues: Large ribosomal subunit protein bL25 (95 aa).

Belongs to the bacterial ribosomal protein bL25 family. Part of the 50S ribosomal subunit; part of the 5S rRNA/L5/L18/L25 subcomplex. Contacts the 5S rRNA. Binds to the 5S rRNA independently of L5 and L18.

This is one of the proteins that binds to the 5S RNA in the ribosome where it forms part of the central protuberance. The chain is Large ribosomal subunit protein bL25 from Shewanella woodyi (strain ATCC 51908 / MS32).